The sequence spans 143 residues: Type II secretion system core protein G (143 aa).

Residues 1–8 constitute a propeptide, leader sequence; it reads MQKRRQSG. The residue at position 9 (Phe9) is an N-methylphenylalanine. A helical transmembrane segment spans residues 9-29; the sequence is FTLLEVMVVIVILGILASLVV. A disordered region spans residues 70 to 92; that stretch reads QGLDALVNKPTAAPEPRSYRDGG.

This sequence belongs to the GSP G family. In terms of assembly, type II secretion system is composed of four main components: the outer membrane complex, the inner membrane complex, the cytoplasmic secretion ATPase and the periplasm-spanning pseudopilus. Forms homomultimers. Cleaved by the prepilin peptidase. In terms of processing, methylated by prepilin peptidase at the amino group of the N-terminal phenylalanine once the leader sequence is cleaved.

The protein resides in the cell inner membrane. In terms of biological role, core component of the type II secretion system required for the energy-dependent secretion of extracellular factors such as proteases and toxins from the periplasm. Pseudopilin (pilin-like) protein that polymerizes to form the pseudopilus. Further polymerization triggers pseudopilus growth. This chain is Type II secretion system core protein G (exeG), found in Aeromonas hydrophila.